Reading from the N-terminus, the 873-residue chain is MASRRKSTTPCMVLASEQDPDLELISDLDEGPPVLTPVENTRAESISSDEEVHESVDSDNQQNKKVEGGYECKYCTFQTPDLNMFTFHVDSEHPNVVLNSSYVCVECNFLTKRYDALSEHNLKYHPGEENFKLTMVKRNNQTIFEQTINDLTFDGSFIKEENAEQAESTEVSSSGISISKTPIMKMMKNKVENKRIAVHHNSVEDVPEEKENEIKPDREEIVENPSSSASESNTSTSIVNRIHPSTASTVVTPAAVLPGLAQVITAVSAQQNSNLIPKVLIPVNSIPTYNAALDNNPLLLNTYNKFPYPTMSEITVLSAQAKYTEEQIKIWFSAQRLKHGVSWTPEEVEEARRKQFNGTVHTVPQTITVIPTHISTGSNGLPSILQTCQIVGQPGLVLTQVAGTNTLPVTAPIALTVAGVPSQNNIQKSQVPAAQPTAETKPATAAVPTSQSVKHETALVNPDSFGIRAKKTKEQLAELKVSYLKNQFPHDSEIIRLMKITGLTKGEIKKWFSDTRYNQRNSKSNQCLHLNNDSSTTIIIDSSDETTESPTVGTAQPKQSWNPFPDFTPQKFKEKTAEQLRVLQASFLNSSVLTDEELNRLRAQTKLTRREIDAWFTEKKKSKALKEEKMEIDESNAGSSKEEAGETSPGDESGAPKSGSTGKICKKTPEQLHMLKSAFVRTQWPSPEEYDKLAKESGLARTDIVSWFGDTRYAWKNGNLKWYYYYQSANSSSMNGLSSLRKRGRGRPKGRGRGRPRGRPRGSKRINNWDRGPSLIKFKTGTAILKDYYLKHKFLNEQDLDELVNKSHMGYEQVREWFAERQRRSELGIELFEENEEEDEVIDDQEEDEEETDDSDTWEPPRHVKRKLSKSDD.

A disordered region spans residues 24-63 (LISDLDEGPPVLTPVENTRAESISSDEEVHESVDSDNQQN). Threonine 36 is subject to Phosphothreonine. Residues serine 45, serine 47, and serine 48 each carry the phosphoserine modification. 2 consecutive C2H2-type zinc fingers follow at residues 70–93 (YECKYCTFQTPDLNMFTFHVDSEH) and 102–125 (YVCVECNFLTKRYDALSEHNLKYH). Residue lysine 159 forms a Glycyl lysine isopeptide (Lys-Gly) (interchain with G-Cter in SUMO2) linkage. The tract at residues 200–236 (HNSVEDVPEEKENEIKPDREEIVENPSSSASESNTST) is disordered. At serine 202 the chain carries Phosphoserine. A compositionally biased stretch (basic and acidic residues) spans 212 to 221 (NEIKPDREEI). The span at 223–236 (ENPSSSASESNTST) shows a compositional bias: low complexity. Residues 272–432 (NSNLIPKVLI…QNNIQKSQVP (161 aa)) are required for dimerization. The segment at 272–564 (NSNLIPKVLI…AQPKQSWNPF (293 aa)) is required for interaction with NFYA. The homeobox 1 DNA-binding region spans 284–346 (NSIPTYNAAL…LKHGVSWTPE (63 aa)). Residues lysine 441, lysine 454, lysine 485, and lysine 629 each participate in a glycyl lysine isopeptide (Lys-Gly) (interchain with G-Cter in SUMO2) cross-link. DNA-binding regions (homeobox) lie at residues 464-526 (SFGI…KSNQ) and 569-630 (PQKF…EEKM). Disordered regions lie at residues 626–667 (KEEK…ICKK) and 732–769 (SSMNGLSSLRKRGRGRPKGRGRGRPRGRPRGSKRINNW). The residue at position 648 (serine 648) is a Phosphoserine. The homeobox 4 DNA-binding region spans 660-722 (STGKICKKTP…YAWKNGNLKW (63 aa)). Positions 734–768 (MNGLSSLRKRGRGRPKGRGRGRPRGRPRGSKRINN) are required for nuclear localization. Over residues 740 to 764 (LRKRGRGRPKGRGRGRPRGRPRGSK) the composition is skewed to basic residues. The residue at position 774 (serine 774) is a Phosphoserine. The segment at residues 777–832 (KFKTGTAILKDYYLKHKFLNEQDLDELVNKSHMGYEQVREWFAERQRRSELGIELF) is a DNA-binding region (homeobox 5). Positions 829-873 (IELFEENEEEDEVIDDQEEDEEETDDSDTWEPPRHVKRKLSKSDD) are disordered. A compositionally biased stretch (acidic residues) spans 831 to 857 (LFEENEEEDEVIDDQEEDEEETDDSDT). Residues 831–873 (LFEENEEEDEVIDDQEEDEEETDDSDTWEPPRHVKRKLSKSDD) form a required for repressor activity region. Residues 863-873 (HVKRKLSKSDD) are compositionally biased toward basic residues.

It belongs to the ZHX family. In terms of assembly, forms homodimers. Heterodimer (via HD1 domain) with ZHX2 (via HD1 domain). Also forms a heterodimer with ZHX3 which is a prerequisite for repressor activity. Interacts with ATF7IP and NFYA. Interacts (via homeobox domains) with DNMT3B (via PWWP domain).

It is found in the nucleus. Functionally, acts as a transcriptional repressor. Increases DNMT3B-mediated repressive transcriptional activity when DNMT3B is tethered to DNA. May link molecule between DNMT3B and other co-repressor proteins. The protein is Zinc fingers and homeoboxes protein 1 (ZHX1) of Pan troglodytes (Chimpanzee).